The following is a 542-amino-acid chain: Chaperonin GroEL 2 (542 aa).

ATP contacts are provided by residues 30 to 33, lysine 51, 87 to 91, glycine 415, and aspartate 495; these read TLGP and DGTTT.

The protein belongs to the chaperonin (HSP60) family. As to quaternary structure, forms a cylinder of 14 subunits composed of two heptameric rings stacked back-to-back. Interacts with the co-chaperonin GroES.

Its subcellular location is the cytoplasm. The enzyme catalyses ATP + H2O + a folded polypeptide = ADP + phosphate + an unfolded polypeptide.. In terms of biological role, together with its co-chaperonin GroES, plays an essential role in assisting protein folding. The GroEL-GroES system forms a nano-cage that allows encapsulation of the non-native substrate proteins and provides a physical environment optimized to promote and accelerate protein folding. The chain is Chaperonin GroEL 2 from Methylococcus capsulatus (strain ATCC 33009 / NCIMB 11132 / Bath).